The primary structure comprises 138 residues: Hydrogenase maturation factor HypA (138 aa).

H2 contacts Ni(2+). Residues C73, C76, C110, and C113 each contribute to the Zn(2+) site.

Belongs to the HypA/HybF family.

In terms of biological role, involved in the maturation of [NiFe] hydrogenases. Required for nickel insertion into the metal center of the hydrogenase. In Thermococcus sibiricus (strain DSM 12597 / MM 739), this protein is Hydrogenase maturation factor HypA.